The sequence spans 260 residues: Putative ATP-binding protein BruAb2_1123 (260 aa).

An ABC transporter domain is found at 5-228 (ISFNNVVMRY…DLPYPRTEAI (224 aa)). Position 37-44 (37-44 (GPSGCGKS)) interacts with ATP.

This sequence belongs to the ABC transporter superfamily. In terms of assembly, the complex is composed of two ATP-binding proteins (BruAb2_1123), two transmembrane proteins (BruAb2_1124) and a solute-binding protein (BruAb2_1122).

The protein resides in the cell inner membrane. Probably part of an ABC transporter complex. Probably Responsible for energy coupling to the transport system. The polypeptide is Putative ATP-binding protein BruAb2_1123 (Brucella abortus biovar 1 (strain 9-941)).